The chain runs to 248 residues: Proteasome subunit alpha type-7 (248 aa).

A glycan (O-linked (GlcNAc) serine) is linked at Ser-130. At Tyr-153 the chain carries Phosphotyrosine. Position 227 is an N6-acetyllysine (Lys-227).

It belongs to the peptidase T1A family. In terms of assembly, the 26S proteasome consists of a 20S proteasome core and two 19S regulatory subunits. The 20S proteasome core is a barrel-shaped complex made of 28 subunits that are arranged in four stacked rings. The two outer rings are each formed by seven alpha subunits, and the two inner rings are formed by seven beta subunits. The proteolytic activity is exerted by three beta-subunits PSMB5, PSMB6 and PSMB7. PSMA7 interacts directly with the PSMG1-PSMG2 heterodimer which promotes 20S proteasome assembly. Interacts with HIF1A. Interacts with RAB7A. Interacts with PRKN. Interacts with ABL1 and ABL2. Interacts with EMAP2. Interacts with MAVS.

The protein resides in the cytoplasm. It localises to the nucleus. In terms of biological role, component of the 20S core proteasome complex involved in the proteolytic degradation of most intracellular proteins. This complex plays numerous essential roles within the cell by associating with different regulatory particles. Associated with two 19S regulatory particles, forms the 26S proteasome and thus participates in the ATP-dependent degradation of ubiquitinated proteins. The 26S proteasome plays a key role in the maintenance of protein homeostasis by removing misfolded or damaged proteins that could impair cellular functions, and by removing proteins whose functions are no longer required. Associated with the PA200 or PA28, the 20S proteasome mediates ubiquitin-independent protein degradation. This type of proteolysis is required in several pathways including spermatogenesis (20S-PA200 complex) or generation of a subset of MHC class I-presented antigenic peptides (20S-PA28 complex). Inhibits the transactivation function of HIF-1A under both normoxic and hypoxia-mimicking conditions. The interaction with EMAP2 increases the proteasome-mediated HIF-1A degradation under the hypoxic conditions. Plays a role in hepatitis C virus internal ribosome entry site-mediated translation. Mediates nuclear translocation of the androgen receptor (AR) and thereby enhances androgen-mediated transactivation. Promotes MAVS degradation and thereby negatively regulates MAVS-mediated innate immune response. This chain is Proteasome subunit alpha type-7 (PSMA7), found in Bos taurus (Bovine).